The sequence spans 441 residues: Proline--tRNA ligase (441 aa).

The protein belongs to the class-II aminoacyl-tRNA synthetase family. ProS type 2 subfamily. Homodimer.

It is found in the cytoplasm. It carries out the reaction tRNA(Pro) + L-proline + ATP = L-prolyl-tRNA(Pro) + AMP + diphosphate. Catalyzes the attachment of proline to tRNA(Pro) in a two-step reaction: proline is first activated by ATP to form Pro-AMP and then transferred to the acceptor end of tRNA(Pro). The chain is Proline--tRNA ligase from Methylobacterium radiotolerans (strain ATCC 27329 / DSM 1819 / JCM 2831 / NBRC 15690 / NCIMB 10815 / 0-1).